The following is a 133-amino-acid chain: uncharacterized protein (133 aa).

It to E.coli ydcQ.

This is an uncharacterized protein from Haemophilus phage HP1 (strain HP1c1) (Bacteriophage HP1).